A 91-amino-acid chain; its full sequence is Mercuric transport protein periplasmic component (91 aa).

Positions 1–19 (MKKLFAALALAAVVAPVWA) are cleaved as a signal peptide. Residues 22–88 (QTVTLSVPGM…ATGDAGYPSS (67 aa)) enclose the HMA domain. 2 residues coordinate Hg(2+): Cys33 and Cys36.

The protein belongs to the MerP family. As to quaternary structure, monomer.

The protein resides in the periplasm. In terms of biological role, involved in mercury resistance. Acts as a mercury scavenger that specifically binds to a mercuric ion in the periplasm and probably passes it to the cytoplasmic mercuric reductase MerA via the mercuric transport protein MerT. In Alcaligenes sp, this protein is Mercuric transport protein periplasmic component (merP).